The sequence spans 2187 residues: Nascent polypeptide-associated complex subunit alpha, muscle-specific form (2187 aa).

Disordered stretches follow at residues 1–20 (MPGE…PQPQ), 32–73 (LKVA…STPF), and 172–196 (IPPL…KGTA). A compositionally biased stretch (polar residues) spans 9-20 (VPATEQELPQPQ). Residues 178–192 (KTSTSQVPSQGTLNL) show a composition bias toward polar residues. Arginine 247 is modified (asymmetric dimethylarginine). 5 disordered regions span residues 335–370 (DSGA…LSPK), 579–611 (NTVS…SPLV), 738–835 (PKGS…PKDT), 884–1847 (KETL…PVEK), and 1892–2053 (PEAV…KAMS). Over residues 347–369 (SAVTNELCSPPGSSNVAGTSLSP) the composition is skewed to polar residues. Phosphothreonine is present on threonine 590. Polar residues-rich tracts occupy residues 599–609 (AKNTAPSTTSP), 818–835 (VTPT…PKDT), and 887–905 (LATS…TPKS). The residue at position 822 (serine 822) is a Phosphoserine. Pro residues predominate over residues 941-951 (PHVPPTSPPKS). A compositionally biased stretch (low complexity) spans 976 to 998 (TPTYPKKSPKPAASKKTPATPSP). The segment covering 1106-1122 (TPQNATPNESLAASSQK) has biased composition (polar residues). Phosphoserine is present on residues serine 1174 and serine 1177. Positions 1174–1195 (SPLSPKKASKTAAPKEAPATPS) are enriched in low complexity. Phosphothreonine is present on threonine 1364. 2 positions are modified to phosphoserine: serine 1368 and serine 1392. The residue at position 1398 (threonine 1398) is a Phosphothreonine. Serine 1400 and serine 1423 each carry phosphoserine. Residues 1429–1440 (VTPSSKKLSQTV) show a composition bias toward polar residues. Low complexity predominate over residues 1489–1504 (SPSSPKKAPKTAAPPS). Serine 1492 bears the Phosphoserine mark. The span at 1609 to 1631 (PVTTSLAQTAPPSLQKAPSTTIP) shows a compositional bias: polar residues. 2 stretches are compositionally biased toward low complexity: residues 1636–1670 (AAPA…TAPK) and 1714–1727 (SSPP…KRAS). Polar residues predominate over residues 1762–1772 (ACSTGTTTPQA). Low complexity-rich tracts occupy residues 1806–1823 (KSPG…CPDP) and 1892–1914 (PEAV…LAPS). The PXLXP motif lies at 1950–1954 (PPLIP). Residues 1973-1983 (APKPAGTPAPA) are compositionally biased toward pro residues. Positions 2001-2014 (SDSDESVPELEEQD) are enriched in acidic residues. The residue at position 2015 (serine 2015) is a Phosphoserine; by ILK1. Residues 2016–2029 (TQTATQQAQLAAAA) show a composition bias toward low complexity. The segment at 2041-2052 (QSRSEKKARKAM) is required for DNA-binding. The NAC-A/B domain occupies 2042-2107 (SRSEKKARKA…AKIEDLSQQA (66 aa)). Phosphoserine is present on serine 2104. At lysine 2114 the chain carries N6-acetyllysine; alternate. Residue lysine 2114 forms a Glycyl lysine isopeptide (Lys-Gly) (interchain with G-Cter in SUMO2); alternate linkage. Threonine 2131 carries the post-translational modification Phosphothreonine; by GSK3-beta. Position 2133 is a phosphothreonine (threonine 2133). A phosphoserine mark is found at serine 2138, serine 2158, serine 2163, and serine 2175. The UBA domain maps to 2148–2185 (VEVKDIELVMSQANVSRAKAVRALKNNSNDIVNAIMEL).

It belongs to the NAC-alpha family. In terms of assembly, interacts (via PXLXP motif) with the muscle-restricted histone methyltransferase SMYD1 (via MYND-type zinc finger). In terms of processing, phosphorylation of Ser-2015 by ILK during cell adhesion may promote nuclear localization. Phosphorylation of Thr-2131 by GSK3B may promote proteasome mediated degradation. In terms of tissue distribution, specifically expressed in heart and skeletal muscle: it is present in differentiated myotubes but not in myoblasts.

It localises to the cytoplasm. It is found in the nucleus. Its function is as follows. Cardiac- and muscle-specific transcription factor. May act to regulate the expression of genes involved in the development of myotubes. Plays a critical role in ventricular cardiomyocyte expansion and regulates postnatal skeletal muscle growth and regeneration. Involved in the organized assembly of thick and thin filaments of myofibril sarcomeres. The polypeptide is Nascent polypeptide-associated complex subunit alpha, muscle-specific form (Naca) (Mus musculus (Mouse)).